The sequence spans 60 residues: Short neurotoxin 1 (60 aa).

Disulfide bonds link Cys-3–Cys-22, Cys-17–Cys-39, Cys-41–Cys-52, and Cys-53–Cys-58.

This sequence belongs to the three-finger toxin family. Short-chain subfamily. Type I alpha-neurotoxin sub-subfamily. As to expression, expressed by the venom gland.

The protein localises to the secreted. Binds to muscle nicotinic acetylcholine receptor (nAChR) and inhibit acetylcholine from binding to the receptor, thereby impairing neuromuscular transmission. This Dendroaspis jamesoni kaimosae (Eastern Jameson's mamba) protein is Short neurotoxin 1.